We begin with the raw amino-acid sequence, 189 residues long: GTP cyclohydrolase 1 (189 aa).

Positions 78, 81, and 150 each coordinate Zn(2+).

The protein belongs to the GTP cyclohydrolase I family. As to quaternary structure, homomer.

It carries out the reaction GTP + H2O = 7,8-dihydroneopterin 3'-triphosphate + formate + H(+). Its pathway is cofactor biosynthesis; 7,8-dihydroneopterin triphosphate biosynthesis; 7,8-dihydroneopterin triphosphate from GTP: step 1/1. The chain is GTP cyclohydrolase 1 from Listeria monocytogenes serotype 4b (strain CLIP80459).